A 161-amino-acid polypeptide reads, in one-letter code: Epididymal protein 13 (161 aa).

Residues 1-23 (MHRSEPFLKMSLLILLFLGLAEA) form the signal peptide. N-linked (GlcNAc...) asparagine glycosylation occurs at asparagine 56.

The protein resides in the secreted. This Homo sapiens (Human) protein is Epididymal protein 13.